The following is a 529-amino-acid chain: Bifunctional purine biosynthesis protein PurH (529 aa).

The region spanning 1-148 (MNNARPIRRA…KNHKDTTIIV (148 aa)) is the MGS-like domain.

Belongs to the PurH family.

The catalysed reaction is (6R)-10-formyltetrahydrofolate + 5-amino-1-(5-phospho-beta-D-ribosyl)imidazole-4-carboxamide = 5-formamido-1-(5-phospho-D-ribosyl)imidazole-4-carboxamide + (6S)-5,6,7,8-tetrahydrofolate. It carries out the reaction IMP + H2O = 5-formamido-1-(5-phospho-D-ribosyl)imidazole-4-carboxamide. Its pathway is purine metabolism; IMP biosynthesis via de novo pathway; 5-formamido-1-(5-phospho-D-ribosyl)imidazole-4-carboxamide from 5-amino-1-(5-phospho-D-ribosyl)imidazole-4-carboxamide (10-formyl THF route): step 1/1. It participates in purine metabolism; IMP biosynthesis via de novo pathway; IMP from 5-formamido-1-(5-phospho-D-ribosyl)imidazole-4-carboxamide: step 1/1. The chain is Bifunctional purine biosynthesis protein PurH from Shewanella piezotolerans (strain WP3 / JCM 13877).